We begin with the raw amino-acid sequence, 95 residues long: Acylphosphatase (95 aa).

The region spanning 5-93 (RAHLFIRGKV…GEFQDFRILP (89 aa)) is the Acylphosphatase-like domain. Residues Arg20 and Asn38 contribute to the active site.

The protein belongs to the acylphosphatase family.

The catalysed reaction is an acyl phosphate + H2O = a carboxylate + phosphate + H(+). The sequence is that of Acylphosphatase (acyP) from Pyrobaculum arsenaticum (strain DSM 13514 / JCM 11321 / PZ6).